Here is a 473-residue protein sequence, read N- to C-terminus: Dihydrolipoyl dehydrogenase (473 aa).

Residues 36 to 45 (ERYDKLGGVC), Lys-54, and Ala-117 each bind FAD. The cysteines at positions 45 and 50 are disulfide-linked. Residues 182-186 (GSGII), Asp-205, and 270-273 (AIGR) each bind NAD(+). FAD-binding residues include Asp-313 and Ala-321. The active-site Proton acceptor is the His-445.

This sequence belongs to the class-I pyridine nucleotide-disulfide oxidoreductase family. As to quaternary structure, homodimer. It depends on FAD as a cofactor.

The protein localises to the cytoplasm. The enzyme catalyses N(6)-[(R)-dihydrolipoyl]-L-lysyl-[protein] + NAD(+) = N(6)-[(R)-lipoyl]-L-lysyl-[protein] + NADH + H(+). Functionally, lipoamide dehydrogenase is a component of the alpha-ketoacid dehydrogenase complexes. The sequence is that of Dihydrolipoyl dehydrogenase (lpdA) from Buchnera aphidicola subsp. Acyrthosiphon pisum (strain APS) (Acyrthosiphon pisum symbiotic bacterium).